A 471-amino-acid chain; its full sequence is Maintenance of mitochondrial morphology protein 1 (471 aa).

The Lumenal segment spans residues 1–21 (MSSPQNTSCPPSQHSLSFTQG). The helical transmembrane segment at 22–42 (LLLGQLSVVLLIGAFIKFFIF) threads the bilayer. Residues 43–471 (GESPSSSSRG…GSLPGAPAVA (429 aa)) lie on the Cytoplasmic side of the membrane. One can recognise an SMP-LTD domain in the interval 128–370 (QPESLDWFNV…EPRVQLVALP (243 aa)). Disordered stretches follow at residues 271–306 (GTTE…GVRS), 395–415 (EDPA…NRDG), and 448–471 (RGDT…PAVA). Residues 280–295 (PHPENQNESKPSRQDP) are compositionally biased toward basic and acidic residues. Positions 401–410 (ATHSGFTPVN) are enriched in polar residues.

This sequence belongs to the MMM1 family. In terms of assembly, homodimer. Component of the ER-mitochondria encounter structure (ERMES) or MDM complex, composed of MMM1, MDM10, MDM12 and MDM34. An MMM1 homodimer associates with one molecule of MDM12 on each side in a pairwise head-to-tail manner, and the SMP-LTD domains of MMM1 and MDM12 generate a continuous hydrophobic tunnel for phospholipid trafficking.

It is found in the endoplasmic reticulum membrane. Functionally, component of the ERMES/MDM complex, which serves as a molecular tether to connect the endoplasmic reticulum (ER) and mitochondria. Components of this complex are involved in the control of mitochondrial shape and protein biogenesis, and function in nonvesicular lipid trafficking between the ER and mitochondria. The MDM12-MMM1 subcomplex functions in the major beta-barrel assembly pathway that is responsible for biogenesis of all outer membrane beta-barrel proteins, and acts in a late step after the SAM complex. The MDM10-MDM12-MMM1 subcomplex further acts in the TOM40-specific pathway after the action of the MDM12-MMM1 complex. Essential for establishing and maintaining the structure of mitochondria and maintenance of mtDNA nucleoids. This is Maintenance of mitochondrial morphology protein 1 from Arthroderma otae (strain ATCC MYA-4605 / CBS 113480) (Microsporum canis).